A 314-amino-acid chain; its full sequence is Olfactory receptor 1C1 (314 aa).

Residues 1 to 25 (MEKRNLTVVREFVLLGLPSSAEQQH) lie on the Extracellular side of the membrane. Residues 26–49 (LLSVLFLCMYLATTLGNMLIIATI) form a helical membrane-spanning segment. The Cytoplasmic portion of the chain corresponds to 50–57 (GFDSHLHS). A helical transmembrane segment spans residues 58–79 (PMYFFLSNLAFVDICFTSTTVP). Over 80-100 (QMVVNILTGTKTISFAGCLTQ) the chain is Extracellular. The cysteines at positions 97 and 189 are disulfide-linked. The chain crosses the membrane as a helical span at residues 101 to 120 (LFFFVSFVNMDSLLLCVMAY). Over 121-139 (DRYVAICHPLHYTARMNLC) the chain is Cytoplasmic. A helical membrane pass occupies residues 140-158 (LCVQLVAGLWLVTYLHALL). Residues 159–195 (HTVLIAQLSFCASNIIHHFFCDLNPLLQLSCSDVSFN) are Extracellular-facing. The chain crosses the membrane as a helical span at residues 196–219 (VMIIFAVGGLLALTPLVCILVSYG). Topologically, residues 220 to 236 (LIFSTVLKITSTQGKQR) are cytoplasmic. A helical transmembrane segment spans residues 237 to 259 (AVSTCSCHLSVVVLFYGTAIAVY). Topologically, residues 260 to 272 (FSPSSPHMPESDT) are extracellular. Residues 273-292 (LSTIMYSMVAPMLNPFIYTL) traverse the membrane as a helical segment. Residues 293–314 (RNRDMKRGLQKMLLKCTVFQQQ) are Cytoplasmic-facing.

It belongs to the G-protein coupled receptor 1 family.

The protein localises to the cell membrane. Odorant receptor. In Homo sapiens (Human), this protein is Olfactory receptor 1C1 (OR1C1).